Here is a 284-residue protein sequence, read N- to C-terminus: 2,3,4,5-tetrahydropyridine-2,6-dicarboxylate N-succinyltransferase (284 aa).

Residues R111 and D148 each coordinate substrate.

It belongs to the transferase hexapeptide repeat family. Homotrimer.

The protein localises to the cytoplasm. It catalyses the reaction (S)-2,3,4,5-tetrahydrodipicolinate + succinyl-CoA + H2O = (S)-2-succinylamino-6-oxoheptanedioate + CoA. The protein operates within amino-acid biosynthesis; L-lysine biosynthesis via DAP pathway; LL-2,6-diaminopimelate from (S)-tetrahydrodipicolinate (succinylase route): step 1/3. The protein is 2,3,4,5-tetrahydropyridine-2,6-dicarboxylate N-succinyltransferase of Ehrlichia ruminantium (strain Gardel).